Consider the following 132-residue polypeptide: MKEKLALALLSFFLGLGSFFSFYVAPTLFKVLERQQAGAVVEKVFPVYFGLGIILVGISLFLGRDSGKLFLSLGILNLLLLLLQEFIVIPKLHGLKATNYELFLKYHGVSMGINLAILLLTLGKVLILIFKR.

Transmembrane regions (helical) follow at residues 7–29 (LALL…PTLF), 44–62 (VFPV…SLFL), 69–88 (LFLS…EFIV), and 108–130 (GVSM…ILIF).

The protein localises to the cell membrane. This is an uncharacterized protein from Aquifex aeolicus (strain VF5).